Reading from the N-terminus, the 455-residue chain is T-box protein VegT-A (455 aa).

Disordered regions lie at residues 21–40 (SNCA…SSQD), 229–262 (REQE…DSPE), and 295–346 (ANQG…EPSS). Residues 57–230 (LWSQFHQEGT…HNPFAKGFRE (174 aa)) constitute a DNA-binding region (T-box). Basic and acidic residues predominate over residues 229–241 (REQERSHKRDDVL). The segment covering 308 to 324 (GANQEQQVPTSSSNFYN) has biased composition (polar residues).

Forms a repression complex on the promoters of the nodal/nr1 and siamois genes with the maternal factors tcf7l1/tcf3 and pouf5.1/oct-25. Interacts (via C-terminus) with tcf7l1/tcf3 (via N-terminus). Also interacts with the other POU-domain transcription factors pou5f1.2/oct-91 and pou5f1.3/oct-60. In terms of tissue distribution, uniformly distributed in stage I oocytes but becomes localized to the vegetal hemisphere by stage II and remains so thereafter throughout oogenesis and the early embryonic cleavage stages. Zygotic expression parallels blastopore formation and shifts from dorsal expression in the marginal zone of late blastula and early gastrula stages to a ventral/lateral expression at the posterior end of later stage embryos. Expression is excluded from the notochord. In tailbud and tadpole stages, expressed exclusively in a subset of posterior Rohon-Beard neurons.

It is found in the nucleus. Functionally, transcription factor required for both mesoderm and endoderm formation in the embryo; signaling determinants and concentration levels may determine which germ layer is formed. Acts together with beta-catenin to activate genes that are responsible for mesoderm induction including wnt-8, eomes t/bra, siamois, mix1 and sox17. Directly binds to promoter DNA. Patterns the mesoderm along the dorsoventral and posterior axis. Activates siamois gene transcription when alone or in combination with beta-catenin, but inhibits siamois transcription in combination with pou5f1.1/oct-25. This chain is T-box protein VegT-A (vegt-a), found in Xenopus laevis (African clawed frog).